Here is a 672-residue protein sequence, read N- to C-terminus: DNA polymerase eta (672 aa).

The 241-residue stretch at 14 to 254 folds into the UmuC domain; the sequence is IAHVDMDCFY…LPIKKMKQLG (241 aa). Mg(2+) is bound by residues Asp-18 and Met-19. Positions 18 and 19 each coordinate Mn(2+). 2 residues coordinate a 2'-deoxyribonucleoside 5'-triphosphate: Tyr-23 and Arg-60. Mg(2+)-binding residues include Asp-120 and Glu-121. 2 residues coordinate Mn(2+): Asp-120 and Glu-121. The active-site Proton acceptor is the Glu-121. DNA-binding stretches follow at residues 318–325 and 362–383; these read KTFPGPRA and TLHA…PSKS. Disordered regions lie at residues 521 to 617 and 648 to 672; these read VSCP…TDWG and QFNT…PLNR. Polar residues-rich tracts occupy residues 523–544 and 570–586; these read CPSN…TQTK and YNAT…DSTV. Composition is skewed to low complexity over residues 587–602 and 651–662; these read SSAS…SHNS and TGKSKGDGSTSS.

This sequence belongs to the DNA polymerase type-Y family. As to quaternary structure, interacts with PCNA1 and PCNA2. The interaction with PCNA2 is required for translesion synthesis (TLS) to repair UV photoproducts. Mg(2+) serves as cofactor. It depends on Mn(2+) as a cofactor. Constitutively expressed in roots, stems, leaves, flowers and siliques.

It is found in the nucleus. It catalyses the reaction DNA(n) + a 2'-deoxyribonucleoside 5'-triphosphate = DNA(n+1) + diphosphate. Its activity is regulated as follows. The enzyme in complex with the DNA substrate binds a third divalent metal cation. The binding of this third divalent cation, which is coordinated by water molecules and two oxygen atoms from DNA and dNTP, is essential for catalyzing the DNA synthesis. Functionally, error-free DNA polymerase specifically involved in DNA repair. Plays an important role in translesion synthesis (TLS), where the normal high fidelity DNA polymerases cannot proceed and DNA synthesis stalls. Plays an important role in the repair of UV-induced pyrimidine dimers and confers resistance to ultraviolet light. Depending on the context, it inserts the correct base, but may cause base transitions and transversions. Forms a Schiff base with 5'-deoxyribose phosphate at abasic sites, but does not have lyase activity. Targets POLI to replication foci. Exhibits cyclobutane dimer nonmutagenic bypass activity in vitro. The protein is DNA polymerase eta (POLH) of Arabidopsis thaliana (Mouse-ear cress).